Here is a 334-residue protein sequence, read N- to C-terminus: MGMKKSRPRRGSLAFSPRKRAKKLVPKIRSWPADKKVGLQAFPVYKAGTTHALLIENNPKSPNNGQEVFTPVTVLETPDVTVAGIRLYEKTTKGLKALTEVWAEQLDNDLGRKLTLVKKEEKKTADALDAVLEKATEVRVIVHTNPKTTGIPKKKPEVVEIRIGGSSVAERLAYAKEILGKTLAISDVFEAGEIIDTLAITKGKGFQGSVKRWGIKVQFGKHQRKGVGRHTGSIGPWRPRRVMWTVPLPGQMGFHQRTEYNKRILKLGSEGAEITPKGGFLNYGAVKNGYVVVKGTVQGPAKRLVVLRGSVRAAEDKFGLPEVAYISTESKQGN.

Positions 1–10 (MGMKKSRPRR) are enriched in basic residues. Positions 1 to 20 (MGMKKSRPRRGSLAFSPRKR) are disordered.

The protein belongs to the universal ribosomal protein uL3 family. As to quaternary structure, part of the 50S ribosomal subunit. Forms a cluster with proteins L14 and L24e.

One of the primary rRNA binding proteins, it binds directly near the 3'-end of the 23S rRNA, where it nucleates assembly of the 50S subunit. This Methanococcus maripaludis (strain C7 / ATCC BAA-1331) protein is Large ribosomal subunit protein uL3.